The sequence spans 628 residues: Netrin-4 (628 aa).

Residues 1 to 18 form the signal peptide; the sequence is MGSCARLLLLWGCTVVAA. In terms of domain architecture, Laminin N-terminal spans 30–261; it reads CEKACNPRMG…AIYDFIVKGS (232 aa). Residues Asn-56 and Asn-163 are each glycosylated (N-linked (GlcNAc...) asparagine). Disulfide bonds link Cys-262-Cys-271, Cys-264-Cys-293, Cys-295-Cys-304, Cys-307-Cys-329, Cys-332-Cys-341, Cys-334-Cys-359, Cys-362-Cys-371, Cys-374-Cys-392, Cys-395-Cys-413, Cys-397-Cys-420, Cys-422-Cys-431, and Cys-434-Cys-446. Laminin EGF-like domains lie at 262–331, 332–394, and 395–448; these read CFCN…ECRT, CKCN…ACKP, and CSCH…GCRP. Asn-353 carries an N-linked (GlcNAc...) asparagine glycan. Asn-483 carries an N-linked (GlcNAc...) asparagine glycan. 2 disulfide bridges follow: Cys-506–Cys-576 and Cys-520–Cys-627. The NTR domain maps to 506–627; it reads CECKEQTLGN…KVMDILKREC (122 aa).

May form a homodimer.

The protein resides in the secreted. Its subcellular location is the extracellular space. The protein localises to the extracellular matrix. May play an important role in neural, kidney and vascular development. In Pongo abelii (Sumatran orangutan), this protein is Netrin-4 (NTN4).